Here is a 122-residue protein sequence, read N- to C-terminus: Acidic phospholipase A2 4 (122 aa).

Intrachain disulfides connect Cys-26–Cys-115, Cys-28–Cys-44, Cys-43–Cys-95, Cys-49–Cys-122, Cys-50–Cys-88, Cys-57–Cys-81, and Cys-75–Cys-86. 3 residues coordinate Ca(2+): Phe-27, Gly-29, and Gly-31. His-47 is a catalytic residue. Asp-48 is a binding site for Ca(2+). Asp-89 is an active-site residue.

It belongs to the phospholipase A2 family. Group II subfamily. D49 sub-subfamily. Ca(2+) is required as a cofactor. As to expression, expressed by the venom gland.

It is found in the secreted. The enzyme catalyses a 1,2-diacyl-sn-glycero-3-phosphocholine + H2O = a 1-acyl-sn-glycero-3-phosphocholine + a fatty acid + H(+). Its function is as follows. Snake venom phospholipase A2 (PLA2) that has high lipolytic activity. PLA2 catalyzes the calcium-dependent hydrolysis of the 2-acyl groups in 3-sn-phosphoglycerides. The polypeptide is Acidic phospholipase A2 4 (Craspedocephalus gramineus (Bamboo pit viper)).